A 310-amino-acid chain; its full sequence is MTNFEKIIAQNKLKTNAVLATYCVIFAFIGLLVDVIRINANDLGTALFKLMTFQIFPTITIIMFLVAFVIIVVCIQNFSSIMLSGDEYKLIDKSKVLSSKENQIHRLLLELLEEAKLHFEPKLYIIKAPYMNAFASGWNESNSLIALTSALIERLDRDELKAVIAHELSHIRHNDIRLTMCVGILSNIMLLVANFSVYFFMGNRKNSGANLARMILLVLQIILPFLTLLLQMYLSRTREYMADSGAAFLMHDNKPMIRALQKISNDYANNDYKGVDQNSTRSAAYLFSAEMFSTHPSIKNRIQSLSRRVI.

The next 2 membrane-spanning stretches (helical) occupy residues 16–36 and 55–75; these read NAVL…VDVI and IFPT…VVCI. Histidine 166 contacts Zn(2+). The active site involves glutamate 167. Histidine 170 contacts Zn(2+). Transmembrane regions (helical) follow at residues 182-202 and 214-234; these read VGIL…FFMG and MILL…QMYL. Zn(2+) is bound at residue glutamate 239.

It belongs to the peptidase M48B family. It depends on Zn(2+) as a cofactor.

Its subcellular location is the cell inner membrane. The protein is Protease HtpX homolog of Helicobacter pylori (strain Shi470).